Reading from the N-terminus, the 892-residue chain is Alanine--tRNA ligase (892 aa).

Residues His-593, His-597, Cys-694, and His-698 each coordinate Zn(2+).

The protein belongs to the class-II aminoacyl-tRNA synthetase family. It depends on Zn(2+) as a cofactor.

The protein localises to the cytoplasm. It carries out the reaction tRNA(Ala) + L-alanine + ATP = L-alanyl-tRNA(Ala) + AMP + diphosphate. Functionally, catalyzes the attachment of alanine to tRNA(Ala) in a two-step reaction: alanine is first activated by ATP to form Ala-AMP and then transferred to the acceptor end of tRNA(Ala). Also edits incorrectly charged Ser-tRNA(Ala) and Gly-tRNA(Ala) via its editing domain. The chain is Alanine--tRNA ligase from Helicobacter hepaticus (strain ATCC 51449 / 3B1).